Consider the following 124-residue polypeptide: MRHYEIVFIVHPDQSEQVPAMIERYKSTITSHGGQIHRVEDWGRRQLAYMIEKLAKAHYVCMNIECDQTTLDELEHAFKFNDAVLRHLIVKMKKAETGPSPMMKEVQREEAKKAAAAQPAEAQA.

The disordered stretch occupies residues 96–124 (ETGPSPMMKEVQREEAKKAAAAQPAEAQA). A compositionally biased stretch (low complexity) spans 114–124 (AAAAQPAEAQA).

It belongs to the bacterial ribosomal protein bS6 family.

Functionally, binds together with bS18 to 16S ribosomal RNA. The sequence is that of Small ribosomal subunit protein bS6 from Burkholderia orbicola (strain MC0-3).